A 97-amino-acid chain; its full sequence is MPEPDARLTAWVHGHVQGVGFRWWTRCRALELGLTGYAANQPDGRVLVVAQGPRPAGEKLLELLRGGTTWPSRPGRVDKVVADWSAPQERFEGFVER.

The Acylphosphatase-like domain occupies 7-97 (RLTAWVHGHV…QERFEGFVER (91 aa)). Catalysis depends on residues Arg22 and Asn40.

Belongs to the acylphosphatase family.

The catalysed reaction is an acyl phosphate + H2O = a carboxylate + phosphate + H(+). The protein is Acylphosphatase (acyP) of Mycobacterium avium (strain 104).